A 599-amino-acid polypeptide reads, in one-letter code: Matrix metallopeptidase-21 (599 aa).

A signal peptide spans 1-20 (MLTVIRRIFIIQTFIFITAE). Positions 21–170 (KIFHSRDHSD…NHEHQAPVRK (150 aa)) are excised as a propeptide. A Zn(2+)-binding site is contributed by Cys-130. Positions 141–170 (DVTGSNSTRNHIRTSTNTSHNHEHQAPVRK) are disordered. The segment covering 143–159 (TGSNSTRNHIRTSTNTS) has biased composition (polar residues). Residue His-309 participates in Zn(2+) binding. Glu-310 is an active-site residue. Residues His-313 and His-319 each coordinate Zn(2+). A disulfide bridge connects residues Cys-355 and Cys-586. Hemopexin repeat units lie at residues 356–415 (TGRF…WHGL), 417–473 (SGGV…FPGV), 474–522 (SGPL…FPAI), and 529–585 (VRSL…WFDI). The N-linked (GlcNAc...) asparagine glycan is linked to Asn-398.

It belongs to the peptidase M10A family. The precursor is cleaved by a furin endopeptidase.

Its function is as follows. Plays a specialized role in the generation of left-right asymmetry during embryogenesis. May act as a negative regulator of the NOTCH-signaling pathway. This Danio rerio (Zebrafish) protein is Matrix metallopeptidase-21.